Here is a 396-residue protein sequence, read N- to C-terminus: Gap junction gamma-1 protein (396 aa).

Topologically, residues 1 to 22 are cytoplasmic; the sequence is MSWSFLTRLLEEIHNHSTFVGK. A helical transmembrane segment spans residues 23–45; the sequence is IWLTVLIVFRIVLTAVGGESIYY. Residues 46–75 lie on the Extracellular side of the membrane; sequence DEQSKFVCNTEQPGCENVCYDAFAPLSHVR. The helical transmembrane segment at 76–95 threads the bilayer; sequence FWVFQIILVATPSVMYLGYA. Residues 96-175 are Cytoplasmic-facing; sequence IHKIAKMEHG…RRIREDGLMK (80 aa). Positions 145-165 are disordered; sequence ELESDKENKEQSQPKPKHDGR. The span at 147–156 shows a compositional bias: basic and acidic residues; that stretch reads ESDKENKEQS. A helical membrane pass occupies residues 176–198; it reads IYVLQLLARTVFEVGFLIGQYFL. At 199 to 228 the chain is on the extracellular side; it reads YGFQVHPFYVCSRLPCPHKIDCFISRPTEK. Residues 229-248 form a helical membrane-spanning segment; the sequence is TIFLLIMYGVTGLCLLLNIW. The Cytoplasmic portion of the chain corresponds to 249–396; sequence EMLHLGFGTI…SGDGKTSVWI (148 aa). Residues 353–396 are disordered; it reads VQAYSHQNNPHGPREKKAKVGSKAGSNKSTASSKSGDGKTSVWI. Positions 376 to 387 are enriched in polar residues; sequence AGSNKSTASSKS.

The protein belongs to the connexin family. Gamma-type subfamily. As to quaternary structure, a connexon is composed of a hexamer of connexins. Interacts with CNST.

Its subcellular location is the cell membrane. It localises to the cell junction. It is found in the gap junction. Its function is as follows. One gap junction consists of a cluster of closely packed pairs of transmembrane channels, the connexons, through which materials of low MW diffuse from one cell to a neighboring cell. The sequence is that of Gap junction gamma-1 protein (GJC1) from Homo sapiens (Human).